Here is a 554-residue protein sequence, read N- to C-terminus: Gamma-aminobutyric acid receptor subunit alpha-4 (554 aa).

Residues 1-35 (MVSAKKVPAIALSAGVSFALLRFLCLAVCLNESPG) form the signal peptide. Over 36–259 (QNQKEEKLCT…FHLRRKMGYF (224 aa)) the chain is Extracellular. Residue N47 is glycosylated (N-linked (GlcNAc...) asparagine). R100 contributes to the 4-aminobutanoate binding site. N144 and N157 each carry an N-linked (GlcNAc...) asparagine glycan. T163 is a binding site for 4-aminobutanoate. The cysteines at positions 172 and 186 are disulfide-linked. Residues 260–280 (MIQTYIPCIMTVILSQVSFWI) form a helical membrane-spanning segment. Topologically, residues 281–284 (NKES) are cytoplasmic. A helical transmembrane segment spans residues 285-305 (VPARTVFGITTVLTMTTLSIS). The Extracellular portion of the chain corresponds to 306–318 (ARHSLPKVSYATA). A helical membrane pass occupies residues 319–341 (MDWFIAVCFAFVFSALIEFAAVN). Residues 342–517 (YFTNIQMEKA…PPPSGSGTSK (176 aa)) lie on the Cytoplasmic side of the membrane. Disordered regions lie at residues 350–381 (KAKR…QNTN), 397–435 (ESDV…SPNP), 452–471 (PSAS…ASVG), and 495–515 (ATGK…GSGT). Low complexity predominate over residues 410-422 (SSKSSTVVQESSK). The segment covering 502–511 (TPPPSAPPPS) has biased composition (pro residues). Residues 518-540 (IDKYARILFPVTFGAFNMVYWVV) form a helical membrane-spanning segment. Residues 541–554 (YLSKDTMEKSESLM) lie on the Extracellular side of the membrane.

The protein belongs to the ligand-gated ion channel (TC 1.A.9) family. Gamma-aminobutyric acid receptor (TC 1.A.9.5) subfamily. GABRA4 sub-subfamily. Heteropentamer, formed by a combination of alpha (GABRA1-6), beta (GABRB1-3), gamma (GABRG1-3), delta (GABRD), epsilon (GABRE), rho (GABRR1-3), pi (GABRP) and theta (GABRQ) chains, each subunit exhibiting distinct physiological and pharmacological properties. As to expression, expressed in the brain.

Its subcellular location is the cell membrane. It is found in the postsynaptic cell membrane. It carries out the reaction chloride(in) = chloride(out). Its activity is regulated as follows. Potentiated by histamine. Functionally, alpha subunit of the heteropentameric ligand-gated chloride channel gated by gamma-aminobutyric acid (GABA), a major inhibitory neurotransmitter in the brain. GABA-gated chloride channels, also named GABA(A) receptors (GABAAR), consist of five subunits arranged around a central pore and contain GABA active binding site(s) located at the alpha and beta subunit interface(s). When activated by GABA, GABAARs selectively allow the flow of chloride anions across the cell membrane down their electrochemical gradient. GABAARs containing alpha-4 are predominantly extrasynaptic, contributing to tonic inhibition in dentate granule cells and thalamic relay neurons. Extrasynaptic alpha-4-containing GABAARs control levels of excitability and network activity. GABAAR containing alpha-4-beta-3-delta subunits can simultaneously bind GABA and histamine where histamine binds at the interface of two neighboring beta subunits, which may be involved in the regulation of sleep and wakefulness. The polypeptide is Gamma-aminobutyric acid receptor subunit alpha-4 (Homo sapiens (Human)).